Here is a 658-residue protein sequence, read N- to C-terminus: UvrABC system protein B (658 aa).

A Helicase ATP-binding domain is found at 25–414; it reads KSLKNNNHYQ…LSKKNVAEQI (390 aa). 38–45 is a binding site for ATP; that stretch reads GVTGSGKT. The short motif at 91–114 is the Beta-hairpin element; sequence HFDYYQPESYIPRRDLFIEKDSSI. The 175-residue stretch at 433–607 folds into the Helicase C-terminal domain; that stretch reads QVQDLFDEIK…ELKLRDDEIR (175 aa). The UVR domain maps to 623–658; that stretch reads EKIIKELDKKMRECTKNLDFEEAMRLRDEIAQLRTL.

Belongs to the UvrB family. Forms a heterotetramer with UvrA during the search for lesions. Interacts with UvrC in an incision complex.

It localises to the cytoplasm. Functionally, the UvrABC repair system catalyzes the recognition and processing of DNA lesions. A damage recognition complex composed of 2 UvrA and 2 UvrB subunits scans DNA for abnormalities. Upon binding of the UvrA(2)B(2) complex to a putative damaged site, the DNA wraps around one UvrB monomer. DNA wrap is dependent on ATP binding by UvrB and probably causes local melting of the DNA helix, facilitating insertion of UvrB beta-hairpin between the DNA strands. Then UvrB probes one DNA strand for the presence of a lesion. If a lesion is found the UvrA subunits dissociate and the UvrB-DNA preincision complex is formed. This complex is subsequently bound by UvrC and the second UvrB is released. If no lesion is found, the DNA wraps around the other UvrB subunit that will check the other stand for damage. The chain is UvrABC system protein B from Helicobacter pylori (strain ATCC 700392 / 26695) (Campylobacter pylori).